A 162-amino-acid polypeptide reads, in one-letter code: 2-C-methyl-D-erythritol 2,4-cyclodiphosphate synthase (162 aa).

Residues D12 and H14 each coordinate a divalent metal cation. Residues 12–14 and 38–39 contribute to the 4-CDP-2-C-methyl-D-erythritol 2-phosphate site; these read DVH and HS. H46 serves as a coordination point for a divalent metal cation. 4-CDP-2-C-methyl-D-erythritol 2-phosphate-binding positions include 60–62, 65–69, and R146; these read DIG and FPDTD.

The protein belongs to the IspF family. Homotrimer. A divalent metal cation is required as a cofactor.

The catalysed reaction is 4-CDP-2-C-methyl-D-erythritol 2-phosphate = 2-C-methyl-D-erythritol 2,4-cyclic diphosphate + CMP. It participates in isoprenoid biosynthesis; isopentenyl diphosphate biosynthesis via DXP pathway; isopentenyl diphosphate from 1-deoxy-D-xylulose 5-phosphate: step 4/6. In terms of biological role, involved in the biosynthesis of isopentenyl diphosphate (IPP) and dimethylallyl diphosphate (DMAPP), two major building blocks of isoprenoid compounds. Catalyzes the conversion of 4-diphosphocytidyl-2-C-methyl-D-erythritol 2-phosphate (CDP-ME2P) to 2-C-methyl-D-erythritol 2,4-cyclodiphosphate (ME-CPP) with a corresponding release of cytidine 5-monophosphate (CMP). The chain is 2-C-methyl-D-erythritol 2,4-cyclodiphosphate synthase from Bordetella bronchiseptica (strain ATCC BAA-588 / NCTC 13252 / RB50) (Alcaligenes bronchisepticus).